The primary structure comprises 257 residues: UPF0246 protein HAPS_0280 (257 aa).

The protein belongs to the UPF0246 family.

The chain is UPF0246 protein HAPS_0280 from Glaesserella parasuis serovar 5 (strain SH0165) (Haemophilus parasuis).